A 264-amino-acid chain; its full sequence is Cytosolic Fe-S cluster assembly factor Nubp2 homolog (264 aa).

14–21 is a binding site for ATP; the sequence is GKGGVGKS. [4Fe-4S] cluster-binding residues include Cys188 and Cys191.

It belongs to the Mrp/NBP35 ATP-binding proteins family. NUBP2/CFD1 subfamily. As to quaternary structure, heterotetramer of 2 Nubp1 and 2 Nubp2 chains. [4Fe-4S] cluster serves as cofactor.

It localises to the cytoplasm. Its function is as follows. Component of the cytosolic iron-sulfur (Fe/S) protein assembly (CIA) machinery. Required for maturation of extramitochondrial Fe-S proteins. The Nubp1-Nubp2 heterotetramer forms a Fe-S scaffold complex, mediating the de novo assembly of an Fe-S cluster and its transfer to target apoproteins. This chain is Cytosolic Fe-S cluster assembly factor Nubp2 homolog, found in Drosophila grimshawi (Hawaiian fruit fly).